The chain runs to 412 residues: AT-rich interactive domain-containing protein 3C (412 aa).

Residues 1–23 (MEALQKQQAARLAQGVGPLAPAC) are compositionally biased toward low complexity. The interval 1–96 (MEALQKQQAA…SSQPPGLHPH (96 aa)) is disordered. The segment covering 50–73 (AEEEEDAEEDEEKREEAGAEEEAA) has biased composition (acidic residues). Over residues 78 to 87 (PGAQGPSSPS) the composition is skewed to low complexity. One can recognise an ARID domain in the interval 113-205 (DPKRKEFLDD…YLYPYECETR (93 aa)). Disordered stretches follow at residues 232-278 (TPLF…AHAC) and 388-412 (PVPA…SILP). Residues 259–272 (TQSSPGPAQGSTSG) are compositionally biased toward polar residues. One can recognise an REKLES domain in the interval 304 to 389 (LALGPTREKL…GVLFARRQPV (86 aa)).

In terms of assembly, interacts (via REKLES DOMAIN) with NPM1; the interaction mediates ARID3C nuclear shuttling.

It is found in the nucleus. Transcription factor involved in monocyte-to-macrophage differentiation. Forms a complex with NPM1 to translocate to the nucleus, acting as a transcription factor that promotes the expression of the genes involved in macrophage differentiation, such as STAT3, STAT1 and JUNB. This Homo sapiens (Human) protein is AT-rich interactive domain-containing protein 3C.